The chain runs to 129 residues: Small ribosomal subunit protein uS9 (129 aa).

It belongs to the universal ribosomal protein uS9 family.

The chain is Small ribosomal subunit protein uS9 from Helicobacter hepaticus (strain ATCC 51449 / 3B1).